The following is a 150-amino-acid chain: Geranyl diphosphate phosphohydrolase (150 aa).

The region spanning 14-147 is the Nudix hydrolase domain; that stretch reads SIKVAVVVCL…DNVVQDGFNP (134 aa). Positions 48-69 match the Nudix box motif; sequence GHLEFGESFEECAARELKEETD. The Mg(2+) site is built by glutamate 63 and glutamate 67.

The protein belongs to the Nudix hydrolase family. Expressed in petals. Little or no expression in stamens, sepals or young leaves.

The protein resides in the cytoplasm. It catalyses the reaction (2E)-geranyl diphosphate + H2O = (2E)-geranyl phosphate + phosphate + H(+). Its function is as follows. Involved in a cytosolic pathway for the biosynthesis of free monoterpene alcohols that contribute to fragrance. Lacks terpene synthase activity, but has a diphosphohydrolase activity with geranyl diphosphate and farnesyl diphosphate as substrates. No activity with 8-oxo-dGTP and dGTP and unable to dephosphorylate geranyl phosphate to geraniol. This chain is Geranyl diphosphate phosphohydrolase, found in Rosa hybrid cultivar.